The chain runs to 71 residues: Movement protein TGBp3 (71 aa).

The Lumenal portion of the chain corresponds to 1–3; it reads MEA. Residues 4 to 26 traverse the membrane as a helical segment; sequence GAYLNAIIFVLVATIIAVISVGL. Over 27–71 the chain is Cytoplasmic; that stretch reads TQTEPCTIRITGESITVHACHLDSETIKALATLKPLSLERLSFHQ.

The protein belongs to the Tymovirales TGBp3 protein family.

It is found in the host endoplasmic reticulum membrane. In terms of biological role, plays a role in viral cell-to-cell propagation, by facilitating genome transport to neighboring plant cells through plasmosdesmata. May induce the formation of granular vesicles derived from the Endoplasmic reticulum, which align on actin filaments. The polypeptide is Movement protein TGBp3 (Brassica campestris (Field mustard)).